The chain runs to 179 residues: Protein GrpE (179 aa).

A disordered region spans residues 1–29; that stretch reads MQDQDKYAEQAASIEDPVTAEAASATTPT.

It belongs to the GrpE family. In terms of assembly, homodimer.

The protein localises to the cytoplasm. Its function is as follows. Participates actively in the response to hyperosmotic and heat shock by preventing the aggregation of stress-denatured proteins, in association with DnaK and GrpE. It is the nucleotide exchange factor for DnaK and may function as a thermosensor. Unfolded proteins bind initially to DnaJ; upon interaction with the DnaJ-bound protein, DnaK hydrolyzes its bound ATP, resulting in the formation of a stable complex. GrpE releases ADP from DnaK; ATP binding to DnaK triggers the release of the substrate protein, thus completing the reaction cycle. Several rounds of ATP-dependent interactions between DnaJ, DnaK and GrpE are required for fully efficient folding. The protein is Protein GrpE of Janthinobacterium sp. (strain Marseille) (Minibacterium massiliensis).